Here is a 386-residue protein sequence, read N- to C-terminus: Succinyl-diaminopimelate desuccinylase (386 aa).

Residue H77 participates in Zn(2+) binding. Residue D79 is part of the active site. D110 contributes to the Zn(2+) binding site. E144 serves as the catalytic Proton acceptor. Residues E145, E173, and H359 each contribute to the Zn(2+) site.

Belongs to the peptidase M20A family. DapE subfamily. Homodimer. Zn(2+) serves as cofactor. Co(2+) is required as a cofactor.

It carries out the reaction N-succinyl-(2S,6S)-2,6-diaminopimelate + H2O = (2S,6S)-2,6-diaminopimelate + succinate. It participates in amino-acid biosynthesis; L-lysine biosynthesis via DAP pathway; LL-2,6-diaminopimelate from (S)-tetrahydrodipicolinate (succinylase route): step 3/3. Its function is as follows. Catalyzes the hydrolysis of N-succinyl-L,L-diaminopimelic acid (SDAP), forming succinate and LL-2,6-diaminopimelate (DAP), an intermediate involved in the bacterial biosynthesis of lysine and meso-diaminopimelic acid, an essential component of bacterial cell walls. The polypeptide is Succinyl-diaminopimelate desuccinylase (Methylibium petroleiphilum (strain ATCC BAA-1232 / LMG 22953 / PM1)).